The chain runs to 382 residues: Gap junction alpha-1 protein (382 aa).

At 2-23 the chain is on the cytoplasmic side; the sequence is GGWSALAKLLGKVQAYSPAGGK. Serine 5 is modified (phosphoserine). A helical transmembrane segment spans residues 24–44; sequence VWLSVLFIFRILLLGTAVESA. Topologically, residues 45–76 are extracellular; sequence WGDEQSAFRCNTQQPGCENVCYDKSFPISHVR. Intrachain disulfides connect cysteine 54/cysteine 192 and cysteine 187/cysteine 198. The chain crosses the membrane as a helical span at residues 77-97; that stretch reads FWVLQIIFVSVPTLLYLAHVF. Topologically, residues 98 to 155 are cytoplasmic; sequence YVMRKEEKLNKKEEELKVAQTDGANVDMHLKQIEIKKFKYGIEEHGKVKMRGGLLRTY. A Glycyl lysine isopeptide (Lys-Gly) (interchain with G-Cter in SUMO) cross-link involves residue lysine 144. A helical membrane pass occupies residues 156 to 176; sequence IISILFKSVFEVAFLLIQWYI. Over 177–207 the chain is Extracellular; sequence YGFSLSAVYTCKREPCPHQVDCFLSRPTEKT. A helical membrane pass occupies residues 208–228; the sequence is IFIIFMLVVSLVSLALNIIEL. Topologically, residues 229–382 are cytoplasmic; it reads FYVFFKGVKD…SRPRPDDLEI (154 aa). Lysine 237 participates in a covalent cross-link: Glycyl lysine isopeptide (Lys-Gly) (interchain with G-Cter in SUMO). An interaction with NOV region spans residues 244–382; it reads SDPYHATTGP…SRPRPDDLEI (139 aa). A Phosphotyrosine modification is found at tyrosine 247. Residues serine 255, serine 257, and serine 262 each carry the phosphoserine modification. Residues 264-382 are interaction with UBQLN4; it reads EYAYFNGCSS…SRPRPDDLEI (119 aa). Cysteine 271 carries the S-nitrosocysteine modification. At threonine 275 the chain carries Phosphothreonine. Phosphoserine is present on residues serine 306 and serine 314. Residues 317–332 are compositionally biased toward polar residues; the sequence is QNRMGQAGSTISNSHA. The tract at residues 317–382 is disordered; that stretch reads QNRMGQAGST…SRPRPDDLEI (66 aa). Serine 325 is modified (phosphoserine; by CK1). Threonine 326 bears the Phosphothreonine mark. 2 positions are modified to phosphoserine; by CK1: serine 328 and serine 330. A phosphoserine mark is found at serine 344 and serine 365. The span at 362-374 shows a compositional bias: low complexity; it reads RPSSRASSRASSR. At serine 368 the chain carries Phosphoserine; by PKC/PRKCG and PKC/PRKCD. Phosphoserine is present on residues serine 369 and serine 373.

This sequence belongs to the connexin family. Alpha-type (group II) subfamily. A connexon is composed of a hexamer of connexins. Interacts with SGSM3. Interacts with RIC1/CIP150. Interacts with CNST and CSNK1D. Interacts (via C-terminus) with TJP1. Interacts (via C-terminus) with SRC (via SH3 domain). Interacts (not ubiquitinated) with UBQLN4 (via UBA domain). Interacts with NOV. Interacts with TMEM65. Interacts with ANK3/ANKG and PKP2. Post-translationally, phosphorylation at Ser-325, Ser-328 and Ser-330 by CK1 modulates gap junction assembly. Phosphorylated at Ser-368 by PRKCG; phosphorylation induces disassembly of gap junction plaques and inhibition of gap junction activity. Phosphorylation at Ser-368 by PRKCD triggers its internalization into small vesicles leading to proteasome-mediated degradation. In terms of processing, sumoylated with SUMO1, SUMO2 and SUMO3, which may regulate the level of functional Cx43 gap junctions at the plasma membrane. May be desumoylated by SENP1 or SENP2. S-nitrosylation at Cys-271 is enriched at the muscle endothelial gap junction in arteries, it augments channel permeability and may regulate of smooth muscle cell to endothelial cell communication. Post-translationally, acetylated in the developing cortex; leading to delocalization from the cell membrane.

The protein resides in the cell membrane. It is found in the cell junction. Its subcellular location is the gap junction. It localises to the endoplasmic reticulum. Functionally, gap junction protein that acts as a regulator of bladder capacity. A gap junction consists of a cluster of closely packed pairs of transmembrane channels, the connexons, through which materials of low MW diffuse from one cell to a neighboring cell. May play a critical role in the physiology of hearing by participating in the recycling of potassium to the cochlear endolymph. Negative regulator of bladder functional capacity: acts by enhancing intercellular electrical and chemical transmission, thus sensitizing bladder muscles to cholinergic neural stimuli and causing them to contract. May play a role in cell growth inhibition through the regulation of NOV expression and localization. Plays an essential role in gap junction communication in the ventricles. This chain is Gap junction alpha-1 protein (GJA1), found in Canis lupus familiaris (Dog).